The chain runs to 274 residues: 5'-3' exoribonuclease (274 aa).

9 residues coordinate Mn(2+): H8, H10, D15, H40, E65, H76, H190, D247, and H249.

Belongs to the PHP family. TrpH/YciV subfamily. Requires Mn(2+) as cofactor.

The catalysed reaction is a ribonucleoside 3',5'-bisphosphate + H2O = a ribonucleoside 5'-phosphate + phosphate. Its function is as follows. Efficiently catalyzes the hydrolysis of the 3'-phosphate from 3',5'-bis-phosphonucleotides as well as the successive hydrolysis of 5'-phosphomononucleotides from the 5'-end of short pieces of RNA and DNA, with no specificity toward the identity of the nucleotide base. Is more efficient at hydrolyzing RNA oligonucleotides than DNA oligonucleotides. This enzyme can also hydrolyze annealed DNA duplexes, albeit at a catalytic efficiency lower than that of the corresponding single-stranded oligonucleotides. The protein is 5'-3' exoribonuclease of Haemophilus influenzae (strain ATCC 51907 / DSM 11121 / KW20 / Rd).